The sequence spans 827 residues: Sporozoite surface protein 2 (827 aa).

Residues 1-22 (MKLLGNSKYIFVVLLLCISVFL) form the signal peptide. In terms of domain architecture, VWFA spans 43 to 228 (DIHILLDGSG…NMIKPFLTKV (186 aa)). Residues 235-281 (IAHCGKWEEWSECSTTCDEGRKIRRRQILHPGCVSEMTTPCKVRDCP) form the TSP type-1 domain. Cystine bridges form between cysteine 238–cysteine 267, cysteine 247–cysteine 275, and cysteine 251–cysteine 280. The disordered stretch occupies residues 278–761 (RDCPQIPIPP…NKNQSKSNNG (484 aa)). Residues 301–388 (EEPVNPNDPN…NNPNDPSNPN (88 aa)) are compositionally biased toward low complexity. Residues 306 to 392 (PNDPNDPNNP…DPSNPNNPNP (87 aa)) are 29 X 3 AA tandem repeats. Basic residues predominate over residues 392 to 407 (PKKRNPKRRNPNKPKP). The segment at 402-514 (PNKPKPNKPN…EPSNPNEPSN (113 aa)) is 20 tandem tetra-/hexapeptide repeats. Residues 408–464 (NKPNPNKPNPNEPSNPNKPNPNEPSNPNKPNPNEPSNPNKPNPNEPSNPNKPNPNEP) are compositionally biased toward pro residues. A compositionally biased stretch (low complexity) spans 465 to 567 (LNPNEPSNPN…KEPSNPNEPS (103 aa)). 2 tandem repeats follow at residues 603–613 (PEESNPKEPIN) and 614–624 (PEESNPKEPIN). The tract at residues 603–624 (PEESNPKEPINPEESNPKEPIN) is 2 X 11 AA tandem repeats. Residues 657-671 (KGNNIPSNLPENPSD) are compositionally biased toward polar residues. The segment covering 709-724 (YKGHEERIPKPHRSND) has biased composition (basic and acidic residues). The helical transmembrane segment at 764-787 (IAGGIIGGLAILGCAGVGYNFIAG) threads the bilayer.

It is found in the cell membrane. This Plasmodium yoelii yoelii protein is Sporozoite surface protein 2 (SSP2).